A 130-amino-acid polypeptide reads, in one-letter code: Large ribosomal subunit protein bL20 (130 aa).

This sequence belongs to the bacterial ribosomal protein bL20 family.

In terms of biological role, binds directly to 23S ribosomal RNA and is necessary for the in vitro assembly process of the 50S ribosomal subunit. It is not involved in the protein synthesizing functions of that subunit. In Salinispora tropica (strain ATCC BAA-916 / DSM 44818 / JCM 13857 / NBRC 105044 / CNB-440), this protein is Large ribosomal subunit protein bL20.